The primary structure comprises 616 residues: Glutamine--fructose-6-phosphate aminotransferase [isomerizing] (616 aa).

The active-site Nucleophile; for GATase activity is Cys-2. One can recognise a Glutamine amidotransferase type-2 domain in the interval 2 to 222; that stretch reads CGIIGYSGPR…QERIVALSGD (221 aa). The segment at 70–89 is disordered; that stretch reads TGIGHTRWATHGEPSDRNAH. 2 consecutive SIS domains span residues 289–428 and 461–606; these read IRDD…LRGF and LAHW…VDRP. Catalysis depends on Lys-611, which acts as the For Fru-6P isomerization activity.

Homodimer.

It is found in the cytoplasm. It catalyses the reaction D-fructose 6-phosphate + L-glutamine = D-glucosamine 6-phosphate + L-glutamate. In terms of biological role, catalyzes the first step in hexosamine metabolism, converting fructose-6P into glucosamine-6P using glutamine as a nitrogen source. This Tropheryma whipplei (strain TW08/27) (Whipple's bacillus) protein is Glutamine--fructose-6-phosphate aminotransferase [isomerizing].